A 363-amino-acid chain; its full sequence is NADH-quinone oxidoreductase subunit H (363 aa).

The next 10 membrane-spanning stretches (helical) occupy residues 29–49 (VLKI…YVVW), 62–82 (GPMY…KLLF), 96–116 (FIIA…VVPF), 127–147 (VGLL…ILAG), 163–183 (AAQV…VMIA), 202–222 (FFDW…VSGV), 238–257 (EIVA…LFFL), 278–298 (WLSP…DWLW), 299–319 (KGGW…YIWF), and 339–359 (FIPL…YGVI).

This sequence belongs to the complex I subunit 1 family. In terms of assembly, NDH-1 is composed of 14 different subunits. Subunits NuoA, H, J, K, L, M, N constitute the membrane sector of the complex.

The protein resides in the cell inner membrane. It catalyses the reaction a quinone + NADH + 5 H(+)(in) = a quinol + NAD(+) + 4 H(+)(out). In terms of biological role, NDH-1 shuttles electrons from NADH, via FMN and iron-sulfur (Fe-S) centers, to quinones in the respiratory chain. The immediate electron acceptor for the enzyme in this species is believed to be ubiquinone. Couples the redox reaction to proton translocation (for every two electrons transferred, four hydrogen ions are translocated across the cytoplasmic membrane), and thus conserves the redox energy in a proton gradient. This subunit may bind ubiquinone. In Xanthomonas oryzae pv. oryzae (strain MAFF 311018), this protein is NADH-quinone oxidoreductase subunit H.